Reading from the N-terminus, the 413-residue chain is Divalent metal cation transporter MntH (413 aa).

Helical transmembrane passes span 19-39 (LALMGPAFVAAIGYIDPGNFA), 46-66 (ASFGYQLLWVVVWANLMAMLI), 94-114 (VWFYWVQAEIIAMATDLAEFI), 122-142 (LVLGVSLLQGAVLTGVATFLI), 156-176 (VIGGLLLFVAVAYVVELIFSQ), 196-216 (AVFLAAGVLGATIMPHVIYLH), 241-261 (IAMTIAGFVNLAMMATAAAAF), 290-310 (IFGLSLVAAGLSSTVVGTLAG), 329-349 (AVTMLPSFVVILLGLDPTRIL), 350-370 (VMSQVLLSFGIALALVPLLIF), and 392-412 (VIVAIVVSLNGWLIVGSLLGV).

This sequence belongs to the NRAMP family.

The protein resides in the cell inner membrane. H(+)-stimulated, divalent metal cation uptake system. This Klebsiella pneumoniae (strain 342) protein is Divalent metal cation transporter MntH.